Reading from the N-terminus, the 180-residue chain is Beta-lactoglobulin (180 aa).

An N-terminal signal peptide occupies residues 1 to 18 (MKCLLLALGLALACGIQA). 3 cysteine pairs are disulfide-bonded: Cys84–Cys178, Cys124–Cys137, and Cys124–Cys139.

The protein belongs to the calycin superfamily. Lipocalin family. Under physiological conditions beta-lactoglobulin exists as an equilibrium mixture of monomeric and dimeric forms. Interaction with LMBR1L is controversial. Post-translationally, alternate disulfide bonds occur in equal amounts. Synthesized in mammary gland and secreted in milk.

It localises to the secreted. Primary component of whey, it binds retinol and is probably involved in the transport of that molecule. The polypeptide is Beta-lactoglobulin (LGB) (Capra hircus (Goat)).